The primary structure comprises 106 residues: Cell division protein FtsB (106 aa).

Residues Met1–Lys3 are Cytoplasmic-facing. The chain crosses the membrane as a helical span at residues Leu4–Leu21. The Periplasmic portion of the chain corresponds to Gly22–Gln106. The stretch at Arg31 to Gly62 forms a coiled coil.

Belongs to the FtsB family. Part of a complex composed of FtsB, FtsL and FtsQ.

The protein localises to the cell inner membrane. Essential cell division protein. May link together the upstream cell division proteins, which are predominantly cytoplasmic, with the downstream cell division proteins, which are predominantly periplasmic. This chain is Cell division protein FtsB, found in Yersinia pseudotuberculosis serotype O:1b (strain IP 31758).